The chain runs to 666 residues: Probable potassium transport system protein Kup (666 aa).

The next 12 helical transmembrane spans lie at 16–36, 58–78, 100–120, 141–161, 165–185, 221–241, 253–273, 294–314, 343–363, 373–393, 399–419, and 424–444; these read GFII…LYTM, ISLI…LIAL, PWLI…GALT, IYQN…VLFG, FGTG…FSFL, IFIL…YSDL, WPFV…WILA, VYLV…LISG, LYIP…VLAF, YGLA…YYLI, PILA…FFLA, and FMHG…VMFI.

This sequence belongs to the HAK/KUP transporter (TC 2.A.72) family.

Its subcellular location is the cell membrane. The catalysed reaction is K(+)(in) + H(+)(in) = K(+)(out) + H(+)(out). Transport of potassium into the cell. Likely operates as a K(+):H(+) symporter. This is Probable potassium transport system protein Kup from Streptococcus pyogenes serotype M49 (strain NZ131).